Reading from the N-terminus, the 169-residue chain is Gamma-crystallin 2 (169 aa).

Beta/gamma crystallin 'Greek key' domains follow at residues 1–34 and 35–77; these read YEDR…KVDS and GCWM…KVIP. The tract at residues 78-82 is connecting peptide; that stretch reads QQKGP. 2 consecutive Beta/gamma crystallin 'Greek key' domains span residues 83-123 and 124-166; these read HKMK…NVLE and GHWI…RRVL.

It belongs to the beta/gamma-crystallin family. Monomer.

In terms of biological role, crystallins are the dominant structural components of the vertebrate eye lens. This is Gamma-crystallin 2 from Rana temporaria (European common frog).